Here is a 26-residue protein sequence, read N- to C-terminus: ATP synthase subunit gamma, mitochondrial (26 aa).

This sequence belongs to the ATPase gamma chain family. F-type ATPases have 2 components, CF(1) - the catalytic core - and CF(0) - the membrane proton channel. CF(1) has five subunits: alpha(3), beta(3), gamma(1), delta(1), epsilon(1). CF(0) has three main subunits: a, b and c.

Its subcellular location is the mitochondrion. The protein localises to the mitochondrion inner membrane. In terms of biological role, mitochondrial membrane ATP synthase (F(1)F(0) ATP synthase or Complex V) produces ATP from ADP in the presence of a proton gradient across the membrane which is generated by electron transport complexes of the respiratory chain. F-type ATPases consist of two structural domains, F(1) - containing the extramembraneous catalytic core, and F(0) - containing the membrane proton channel, linked together by a central stalk and a peripheral stalk. During catalysis, ATP synthesis in the catalytic domain of F(1) is coupled via a rotary mechanism of the central stalk subunits to proton translocation. Part of the complex F(1) domain and the central stalk which is part of the complex rotary element. The gamma subunit protrudes into the catalytic domain formed of alpha(3)beta(3). Rotation of the central stalk against the surrounding alpha(3)beta(3) subunits leads to hydrolysis of ATP in three separate catalytic sites on the beta subunits. The sequence is that of ATP synthase subunit gamma, mitochondrial (ATPC) from Spinacia oleracea (Spinach).